The primary structure comprises 477 residues: 2-(3-amino-3-carboxypropyl)histidine synthase subunit 2 (477 aa).

[4Fe-4S] cluster is bound by residues Cys88, Cys109, and Cys328.

It belongs to the DPH1/DPH2 family. DPH2 subfamily. Component of the 2-(3-amino-3-carboxypropyl)histidine synthase complex composed of DPH1, DPH2, DPH3 and a NADH-dependent reductase. [4Fe-4S] cluster is required as a cofactor.

Its pathway is protein modification; peptidyl-diphthamide biosynthesis. Its function is as follows. Required for the first step of diphthamide biosynthesis, a post-translational modification of histidine which occurs in elongation factor 2. DPH1 and DPH2 transfer a 3-amino-3-carboxypropyl (ACP) group from S-adenosyl-L-methionine (SAM) to a histidine residue, the reaction is assisted by a reduction system comprising DPH3 and a NADH-dependent reductase. Facilitates the reduction of the catalytic iron-sulfur cluster found in the DPH1 subunit. The sequence is that of 2-(3-amino-3-carboxypropyl)histidine synthase subunit 2 (DPH2) from Gallus gallus (Chicken).